The primary structure comprises 240 residues: UDP-2,3-diacylglucosamine hydrolase (240 aa).

Residues aspartate 7, histidine 9, aspartate 40, asparagine 78, and histidine 113 each coordinate Mn(2+). Residue 78-79 coordinates substrate; the sequence is NR. Residues aspartate 121, serine 159, threonine 163, lysine 166, and histidine 194 each contribute to the substrate site. Histidine 194 and histidine 196 together coordinate Mn(2+).

Belongs to the LpxH family. Mn(2+) is required as a cofactor.

It is found in the cell inner membrane. It carries out the reaction UDP-2-N,3-O-bis[(3R)-3-hydroxytetradecanoyl]-alpha-D-glucosamine + H2O = 2-N,3-O-bis[(3R)-3-hydroxytetradecanoyl]-alpha-D-glucosaminyl 1-phosphate + UMP + 2 H(+). Its pathway is glycolipid biosynthesis; lipid IV(A) biosynthesis; lipid IV(A) from (3R)-3-hydroxytetradecanoyl-[acyl-carrier-protein] and UDP-N-acetyl-alpha-D-glucosamine: step 4/6. Hydrolyzes the pyrophosphate bond of UDP-2,3-diacylglucosamine to yield 2,3-diacylglucosamine 1-phosphate (lipid X) and UMP by catalyzing the attack of water at the alpha-P atom. Involved in the biosynthesis of lipid A, a phosphorylated glycolipid that anchors the lipopolysaccharide to the outer membrane of the cell. The polypeptide is UDP-2,3-diacylglucosamine hydrolase (Stutzerimonas stutzeri (strain A1501) (Pseudomonas stutzeri)).